The primary structure comprises 903 residues: Protein translocase subunit SecA (903 aa).

Residues glutamine 87, 105–109, and aspartate 494 contribute to the ATP site; that span reads GEGKT. The tract at residues 861–883 is disordered; the sequence is SGSQGAAPRQPVRAEGKKVGRND. A compositionally biased stretch (basic and acidic residues) spans 872–881; sequence VRAEGKKVGR. 4 residues coordinate Zn(2+): cysteine 885, cysteine 887, cysteine 896, and cysteine 897.

It belongs to the SecA family. Monomer and homodimer. Part of the essential Sec protein translocation apparatus which comprises SecA, SecYEG and auxiliary proteins SecDF. Other proteins may also be involved. Zn(2+) is required as a cofactor.

The protein resides in the cell membrane. It localises to the cytoplasm. The enzyme catalyses ATP + H2O + cellular proteinSide 1 = ADP + phosphate + cellular proteinSide 2.. Part of the Sec protein translocase complex. Interacts with the SecYEG preprotein conducting channel. Has a central role in coupling the hydrolysis of ATP to the transfer of proteins into and across the cell membrane, serving as an ATP-driven molecular motor driving the stepwise translocation of polypeptide chains across the membrane. This Symbiobacterium thermophilum (strain DSM 24528 / JCM 14929 / IAM 14863 / T) protein is Protein translocase subunit SecA.